The primary structure comprises 262 residues: Taurine import ATP-binding protein TauB (262 aa).

The region spanning 4–234 (VDHASVFFAA…RFAETGDARS (231 aa)) is the ABC transporter domain. 39 to 46 (GASGCGKS) is a binding site for ATP.

Belongs to the ABC transporter superfamily. Taurine importer (TC 3.A.1.17.1) family. The complex is composed of two ATP-binding proteins (TauB), two transmembrane proteins (TauC) and a solute-binding protein (TauA).

It is found in the cell inner membrane. The enzyme catalyses taurine(out) + ATP + H2O = taurine(in) + ADP + phosphate + H(+). Its function is as follows. Part of the ABC transporter complex TauABC involved in taurine import. Responsible for energy coupling to the transport system. The sequence is that of Taurine import ATP-binding protein TauB from Rhizobium johnstonii (strain DSM 114642 / LMG 32736 / 3841) (Rhizobium leguminosarum bv. viciae).